The primary structure comprises 197 residues: Imidazoleglycerol-phosphate dehydratase (197 aa).

Belongs to the imidazoleglycerol-phosphate dehydratase family.

The protein localises to the cytoplasm. It catalyses the reaction D-erythro-1-(imidazol-4-yl)glycerol 3-phosphate = 3-(imidazol-4-yl)-2-oxopropyl phosphate + H2O. It participates in amino-acid biosynthesis; L-histidine biosynthesis; L-histidine from 5-phospho-alpha-D-ribose 1-diphosphate: step 6/9. The chain is Imidazoleglycerol-phosphate dehydratase from Methanocaldococcus jannaschii (strain ATCC 43067 / DSM 2661 / JAL-1 / JCM 10045 / NBRC 100440) (Methanococcus jannaschii).